The primary structure comprises 406 residues: Renin (406 aa).

The signal sequence occupies residues 1–23; that stretch reads MDGWRRMPRWGLLLLLWGSCTFG. The propeptide at 24-66 is activation peptide; it reads LPTDTTTFKRIFLKRMPSIRESLKERGVDMARLGPEWSQPMKR. N-linked (GlcNAc...) asparagine glycosylation is present at asparagine 71. The region spanning 86-403 is the Peptidase A1 domain; it reads YYGEIGIGTP…DRRNNRIGFA (318 aa). Aspartate 104 is an active-site residue. A disulfide bridge links cysteine 117 with cysteine 124. Asparagine 141 carries N-linked (GlcNAc...) asparagine glycosylation. A disulfide bridge links cysteine 283 with cysteine 287. Aspartate 292 is a catalytic residue. An intrachain disulfide couples cysteine 325 to cysteine 362.

The protein belongs to the peptidase A1 family. In terms of assembly, interacts with ATP6AP2.

The protein resides in the secreted. The protein localises to the membrane. It carries out the reaction Cleavage of Leu-|-Xaa bond in angiotensinogen to generate angiotensin I.. With respect to regulation, interaction with ATP6AP2 results in a 5-fold increased efficiency in angiotensinogen processing. Renin is a highly specific endopeptidase, whose only known function is to generate angiotensin I from angiotensinogen in the plasma, initiating a cascade of reactions that produce an elevation of blood pressure and increased sodium retention by the kidney. In Macaca mulatta (Rhesus macaque), this protein is Renin (REN).